The following is a 541-amino-acid chain: Protein VAPYRIN (541 aa).

The MSP domain occupies 4–138 (LIKLDPSNIV…IDSAIKVMFV (135 aa)). 10 ANK repeats span residues 176–205 (QGQT…DIEA), 209–238 (VGST…NTEG), 242–271 (SVFR…RVDS), 275–304 (DGNT…RTDV), 309–338 (EGDT…TKYV), 342–372 (LGKT…CAAA), 374–392 (KGEV…VING), 396–425 (NGWT…DLDA), 429–458 (DGYT…DVEA), and 462–491 (KGVS…SREG).

As to quaternary structure, interacts with EX70I at the periarbuscular membrane (PAM) around the arbuscule hyphal tips. As to expression, expressed in roots.

The protein resides in the cytoplasm. It is found in the nucleus. Its subcellular location is the cell membrane. Its function is as follows. Required for arbuscular mycorrhizal (AM) symbiosis with AM fungi (e.g. Glomus versiforme and Gigaspora gigantea) both during fungal passage across root epidermis and for arbuscule formation in cortical cells; this symbiosis promotes phosphorus (P) and copper (Cu) uptake. Essential for infection by symbiotic nitrogen-fixing rhizobial bacteria (e.g. Sinorhizobium meliloti) leading to the formation of root nodules. The protein is Protein VAPYRIN of Medicago truncatula (Barrel medic).